Consider the following 291-residue polypeptide: Nucleotide-binding protein EUBREC_0697 (291 aa).

8 to 15 (GMSGAGKS) lines the ATP pocket. 59–62 (DVRN) lines the GTP pocket.

It belongs to the RapZ-like family.

Its function is as follows. Displays ATPase and GTPase activities. This chain is Nucleotide-binding protein EUBREC_0697, found in Agathobacter rectalis (strain ATCC 33656 / DSM 3377 / JCM 17463 / KCTC 5835 / VPI 0990) (Eubacterium rectale).